Consider the following 319-residue polypeptide: Glutathione synthetase (319 aa).

Positions 127–311 constitute an ATP-grasp domain; sequence KIFVTEFADL…VASLLWDAIE (185 aa). Position 153 to 209 (153 to 209) interacts with ATP; the sequence is RNEMGDIILKPLYGNGGAGVFHSARDDRNFSSLLEMFGQMFREPYIAQEYLPDVRKG. The Mg(2+) site is built by Glu282 and Asn284.

The protein belongs to the prokaryotic GSH synthase family. Requires Mg(2+) as cofactor. Mn(2+) serves as cofactor.

The enzyme catalyses gamma-L-glutamyl-L-cysteine + glycine + ATP = glutathione + ADP + phosphate + H(+). Its pathway is sulfur metabolism; glutathione biosynthesis; glutathione from L-cysteine and L-glutamate: step 2/2. The sequence is that of Glutathione synthetase from Agrobacterium fabrum (strain C58 / ATCC 33970) (Agrobacterium tumefaciens (strain C58)).